The following is a 234-amino-acid chain: Kappa-casein (234 aa).

The first 21 residues, 1-21, serve as a signal peptide directing secretion; the sequence is MMKSFLLVVNIVALTLPFLAA. 3 repeat units span residues 127–153, 154–179, and 180–207. Residues 127-207 form a 3 X 27 AA tandem repeats region; the sequence is LGKATILSTD…AVPSEEPRES (81 aa). The segment at 143–234 is disordered; sequence QTPVSAAQPT…STGPAIASMA (92 aa). T144 is a glycosylation site (O-linked (GalNAc...) threonine). Residues 144–171 are compositionally biased toward polar residues; sequence TPVSAAQPTVSAGDTPEVSSQFIDTPDT. T158 carries the phosphothreonine modification. Phosphoserine; alternate is present on S162. O-linked (GalNAc...) serine; alternate glycosylation is present at S162.

Belongs to the kappa-casein family. As to expression, mammary gland specific. Secreted in milk.

The protein resides in the secreted. Functionally, kappa-casein stabilizes micelle formation, preventing casein precipitation in milk. The protein is Kappa-casein (CSN3) of Cavia porcellus (Guinea pig).